The sequence spans 322 residues: Beta-ketoacyl-[acyl-carrier-protein] synthase III (322 aa).

Catalysis depends on residues cysteine 113 and histidine 249. Residues 250–254 (QANLR) form an ACP-binding region. Asparagine 279 is an active-site residue.

Belongs to the thiolase-like superfamily. FabH family. As to quaternary structure, homodimer.

The protein localises to the cytoplasm. The enzyme catalyses malonyl-[ACP] + acetyl-CoA + H(+) = 3-oxobutanoyl-[ACP] + CO2 + CoA. It participates in lipid metabolism; fatty acid biosynthesis. In terms of biological role, catalyzes the condensation reaction of fatty acid synthesis by the addition to an acyl acceptor of two carbons from malonyl-ACP. Catalyzes the first condensation reaction which initiates fatty acid synthesis and may therefore play a role in governing the total rate of fatty acid production. Possesses both acetoacetyl-ACP synthase and acetyl transacylase activities. Its substrate specificity determines the biosynthesis of branched-chain and/or straight-chain of fatty acids. The chain is Beta-ketoacyl-[acyl-carrier-protein] synthase III from Marinobacter nauticus (strain ATCC 700491 / DSM 11845 / VT8) (Marinobacter aquaeolei).